A 71-amino-acid polypeptide reads, in one-letter code: Protein SlyX homolog (71 aa).

The protein belongs to the SlyX family.

The polypeptide is Protein SlyX homolog (Azotobacter vinelandii (strain DJ / ATCC BAA-1303)).